Reading from the N-terminus, the 1224-residue chain is Dynactin subunit 1 (1224 aa).

Residues 1 to 10 (MAQSRRHPHG) show a composition bias toward basic residues. Positions 1-30 (MAQSRRHPHGRASSAGPRMSTEASSKPLKV) are disordered. One can recognise a CAP-Gly domain in the interval 49 to 91 (GATLXATGKWVGVILDEAKGKNDGTVQGRKYFTCEENHGIFVR). 3 disordered regions span residues 100-217 (DGAD…RSQV), 374-402 (SASE…RQQR), and 888-918 (PHCH…PPAE). Basic residues predominate over residues 117–146 (VPKRHSRXAAKGSKLRGAKPKKTTARRPKP). Over residues 148-180 (RTPTSAPSSGTAGPSGSASASGGEMSSSEPSTP) the composition is skewed to low complexity. The stretch at 205–540 (SPTKEEENLR…QEASAEKQQQ (336 aa)) forms a coiled coil. Over residues 207–217 (TKEEENLRSQV) the composition is skewed to basic and acidic residues. Coiled-coil stretches lie at residues 936 to 1042 (LKLE…EGLR) and 1081 to 1117 (KDSP…LELA). A disordered region spans residues 1203–1224 (WCSSSRARASPPASACSPPRPS). Positions 1204–1224 (CSSSRARASPPASACSPPRPS) are enriched in low complexity.

The protein belongs to the dynactin 150 kDa subunit family. As to quaternary structure, monomer and homodimer. Subunit of dynactin, a multiprotein complex part of a tripartite complex with dynein and a adapter, such as BICDL1, BICD2 or HOOK3. The dynactin complex is built around ACTR1A/ACTB filament and consists of an actin-related filament composed of a shoulder domain, a pointed end and a barbed end. Its length is defined by its flexible shoulder domain. The soulder is composed of 2 DCTN1 subunits, 4 DCTN2 and 2 DCTN3. DCTN1/p150(glued) binds directly to microtubules and to cytoplasmic dynein. As to expression, ubiquitously expressed.

The protein resides in the cytoplasm. Its subcellular location is the cytoskeleton. The protein localises to the microtubule organizing center. It is found in the centrosome. It localises to the centriole. The protein resides in the spindle. Its subcellular location is the cell cortex. Its function is as follows. Part of the dynactin complex that activates the molecular motor dynein for ultra-processive transport along microtubules. Plays a key role in dynein-mediated retrograde transport of vesicles and organelles along microtubules by recruiting and tethering dynein to microtubules. Binds to both dynein and microtubules providing a link between specific cargos, microtubules and dynein. Essential for targeting dynein to microtubule plus ends, recruiting dynein to membranous cargos and enhancing dynein processivity (the ability to move along a microtubule for a long distance without falling off the track). Can also act as a brake to slow the dynein motor during motility along the microtubule. Can regulate microtubule stability by promoting microtubule formation, nucleation and polymerization and by inhibiting microtubule catastrophe in neurons. Inhibits microtubule catastrophe by binding both to microtubules and to tubulin, leading to enhanced microtubule stability along the axon. Plays a role in metaphase spindle orientation. Plays a role in centriole cohesion and subdistal appendage organization and function. Its recruitment to the centriole in a KIF3A-dependent manner is essential for the maintenance of centriole cohesion and the formation of subdistal appendage. Also required for microtubule anchoring at the mother centriole. Plays a role in primary cilia formation. The polypeptide is Dynactin subunit 1 (DCTN1) (Gallus gallus (Chicken)).